Reading from the N-terminus, the 369-residue chain is MVNPMVIGYIGSAAAIIGFGSNYVPVKKYPVGNGLSYAFILSIGGLCVAFIAMMIHGTFVFSPIGILGGSLWAMANLLIIPIIKLVGLGLGVLLWSSIGIVVGFFSGKFGWLGLEKQIVTHDWMNWLGFVGIVISIFCFFFIKPSLEDDNNNKNVVDRFKNKKGGYIDPMDNEEFPILRGSVNSDGPIKFNKYNNNNNNGDELETSTETIFDKIPTKFKKVAGISMSIICGVLLGVNMIPMQLWKQNHQEASPFDIIFSQFAGVFLFNAFTFMFYAMIKKSPQIYPKTVFPSFISGVMWGIANCGLMISTQNLGYTVGYPISCSGPMIISSLWSVFYFHEIKGTKNLLILCGSFLFLISGIILLAFSSF.

The next 10 helical transmembrane spans lie at Val-6–Val-26, Leu-35–Ile-55, Pro-63–Ile-83, Leu-85–Phe-105, Asp-122–Ile-142, Val-221–Met-241, Ile-256–Ala-276, Thr-288–Ile-308, Gly-318–Phe-338, and Leu-347–Ser-367.

It belongs to the TMEM144 family.

The protein localises to the membrane. The chain is Transmembrane protein 144 homolog A (tmem144A) from Dictyostelium discoideum (Social amoeba).